The following is a 638-amino-acid chain: Threonine--tRNA ligase 2 (638 aa).

The 64-residue stretch at 1–64 (MSKHVHIQLP…EEDAELSIVT (64 aa)) folds into the TGS domain. Positions 245–535 (DHRKLGKQLG…LIEHYGGAFP (291 aa)) are catalytic. Zn(2+)-binding residues include C336, H387, and H512.

Belongs to the class-II aminoacyl-tRNA synthetase family. In terms of assembly, homodimer. Requires Zn(2+) as cofactor.

It localises to the cytoplasm. It catalyses the reaction tRNA(Thr) + L-threonine + ATP = L-threonyl-tRNA(Thr) + AMP + diphosphate + H(+). Its function is as follows. Catalyzes the attachment of threonine to tRNA(Thr) in a two-step reaction: L-threonine is first activated by ATP to form Thr-AMP and then transferred to the acceptor end of tRNA(Thr). Also edits incorrectly charged L-seryl-tRNA(Thr). The polypeptide is Threonine--tRNA ligase 2 (thrZ) (Bacillus subtilis (strain 168)).